The sequence spans 231 residues: eRF1 methyltransferase catalytic subunit mtq2 (231 aa).

Residues 54–58, D80, and N130 each bind S-adenosyl-L-methionine; that span reads GCGSG. 130–133 is a substrate binding site; sequence NPPY.

It belongs to the eukaryotic/archaeal PrmC-related family. In terms of assembly, heterodimer of mtq2-trm112. mtq2 is the catalytic subunit carrying the catalytic and the S-adenosyl L-methionine binding sites.

The protein localises to the cytoplasm. It localises to the nucleus. It catalyses the reaction L-glutaminyl-[peptide chain release factor] + S-adenosyl-L-methionine = N(5)-methyl-L-glutaminyl-[peptide chain release factor] + S-adenosyl-L-homocysteine + H(+). Functionally, methylates eRF1 on 'Gln-182' using S-adenosyl L-methionine as methyl donor. eRF1 needs to be complexed to eRF3 in its GTP-bound form to be efficiently methylated. The protein is eRF1 methyltransferase catalytic subunit mtq2 (mtq2) of Schizosaccharomyces pombe (strain 972 / ATCC 24843) (Fission yeast).